A 119-amino-acid chain; its full sequence is Urotensin-2B (119 aa).

The N-terminal stretch at 1–28 is a signal peptide; it reads MNKILSSTVCFGLLTLLSVLSFLQSVHG. Residues 29 to 109 constitute a propeptide that is removed on maturation; it reads RPYLTQGNEI…VDGLFSSHPS (81 aa). A disulfide bond links Cys-113 and Cys-118.

This sequence belongs to the urotensin-2 family.

It is found in the secreted. Potent vasoconstrictor. This Homo sapiens (Human) protein is Urotensin-2B (UTS2B).